The following is a 353-amino-acid chain: Phenol hydroxylase P5 protein (353 aa).

One can recognise a 2Fe-2S ferredoxin-type domain in the interval Y3–E93. Residues C37, C42, C45, and C77 each coordinate [2Fe-2S] cluster. Residues V102 to R201 enclose the FAD-binding FR-type domain.

In terms of assembly, the multicomponent enzyme phenol hydroxylase is formed by P0, P1, P2, P3, P4 and P5 polypeptides. It depends on FAD as a cofactor. Requires [2Fe-2S] cluster as cofactor.

It catalyses the reaction phenol + NADPH + O2 + H(+) = catechol + NADP(+) + H2O. It functions in the pathway aromatic compound metabolism; phenol degradation. Catabolizes phenol, and some of its methylated derivatives. P5 is required for growth on phenol, and for in vitro phenol hydroxylase activity. Functionally, probable electron transfer from NADPH, via FAD and the 2Fe-2S center, to the oxygenase activity site of the enzyme. This Acinetobacter pittii (strain PHEA-2) protein is Phenol hydroxylase P5 protein (mphP).